The primary structure comprises 288 residues: CUF1-dependent copper transporter 1 (288 aa).

Residue asparagine 18 is glycosylated (N-linked (GlcNAc...) asparagine). A helical transmembrane segment spans residues 42–62 (MPSSAGATVGVCIGLFILAIF). 2 disordered regions span residues 106 to 125 (PVLF…YNPL) and 154 to 180 (RESQ…GSGV). The span at 158–167 (EGSSAPSYAH) shows a compositional bias: polar residues. Positions 168–177 (SQQGQAQAQG) are enriched in low complexity. Residues 251–271 (LLMLVVMTFNIWWMISVVIGC) form a helical membrane-spanning segment.

Belongs to the copper transporter (Ctr) (TC 1.A.56) family. SLC31A subfamily. As to quaternary structure, interacts with the copper acquisition factor BIM1.

It is found in the cell membrane. Its function is as follows. High affinity copper transporter involved in Cu(+) import into the cell upon copper-limitating conditions. Functions with BIM1 and probably also FRE4 and FRE7, where FRE4 and FRE7 metalloreductases liberate the Cu(2+) bound to the BIM1 copper-binding site for subsequent import of Cu(+) into the cell by CTR1, via the reduction of BIM1-bound Cu(2+) to Cu(+) to reduce binding affinity for BIM1 but increase affinity for CTR1. The BIM1-CTR1 pathway for copper uptake plays a key role in colonization in the brain where copper amounts are low and thus in cryptococcal meningitis. This Cryptococcus neoformans var. grubii serotype A (strain H99 / ATCC 208821 / CBS 10515 / FGSC 9487) (Filobasidiella neoformans var. grubii) protein is CUF1-dependent copper transporter 1.